The primary structure comprises 460 residues: Bifunctional protein GlmU (460 aa).

The segment at 1 to 229 (MTNYAIILAA…FNESLGVNDR (229 aa)) is pyrophosphorylase. UDP-N-acetyl-alpha-D-glucosamine-binding positions include 8-11 (LAAG), Lys-22, Gln-72, and 77-78 (GT). Residue Asp-102 coordinates Mg(2+). Residues Gly-139, Glu-154, Asn-169, and Asn-227 each coordinate UDP-N-acetyl-alpha-D-glucosamine. Residue Asn-227 coordinates Mg(2+). Residues 230 to 250 (VALAIAETVMRQRITQKHMVN) are linker. The segment at 251–460 (GVTFQNPETV…RLAHHPSRSK (210 aa)) is N-acetyltransferase. Arg-332 and Lys-350 together coordinate UDP-N-acetyl-alpha-D-glucosamine. His-362 serves as the catalytic Proton acceptor. UDP-N-acetyl-alpha-D-glucosamine-binding residues include Tyr-365 and Asn-376. Acetyl-CoA is bound by residues Ala-379, 385 to 386 (NY), Ser-404, Ala-422, and Arg-439.

It in the N-terminal section; belongs to the N-acetylglucosamine-1-phosphate uridyltransferase family. This sequence in the C-terminal section; belongs to the transferase hexapeptide repeat family. Homotrimer. It depends on Mg(2+) as a cofactor.

It is found in the cytoplasm. The enzyme catalyses alpha-D-glucosamine 1-phosphate + acetyl-CoA = N-acetyl-alpha-D-glucosamine 1-phosphate + CoA + H(+). The catalysed reaction is N-acetyl-alpha-D-glucosamine 1-phosphate + UTP + H(+) = UDP-N-acetyl-alpha-D-glucosamine + diphosphate. Its pathway is nucleotide-sugar biosynthesis; UDP-N-acetyl-alpha-D-glucosamine biosynthesis; N-acetyl-alpha-D-glucosamine 1-phosphate from alpha-D-glucosamine 6-phosphate (route II): step 2/2. It functions in the pathway nucleotide-sugar biosynthesis; UDP-N-acetyl-alpha-D-glucosamine biosynthesis; UDP-N-acetyl-alpha-D-glucosamine from N-acetyl-alpha-D-glucosamine 1-phosphate: step 1/1. It participates in bacterial outer membrane biogenesis; LPS lipid A biosynthesis. Functionally, catalyzes the last two sequential reactions in the de novo biosynthetic pathway for UDP-N-acetylglucosamine (UDP-GlcNAc). The C-terminal domain catalyzes the transfer of acetyl group from acetyl coenzyme A to glucosamine-1-phosphate (GlcN-1-P) to produce N-acetylglucosamine-1-phosphate (GlcNAc-1-P), which is converted into UDP-GlcNAc by the transfer of uridine 5-monophosphate (from uridine 5-triphosphate), a reaction catalyzed by the N-terminal domain. In Streptococcus pyogenes serotype M1, this protein is Bifunctional protein GlmU.